The chain runs to 510 residues: MSHLVLKPGTLTLSQIRDISRNKLTLELADEAIADINISSGIVQKIIDEGRTVYGINTGFGLLANTKIEDKDLQLLQRSIVLSHAAGTGQYMQDATVRLMMVLKINSLSRGFSGIRLEVINFLIQLVNAEVYPCVPEKGSVGASGDLAPLSHMSLTLLGEGEVSYKGQIMSAKEGLEIAGLEPIELAAKEGLALLNGTQASTALALEGLFNAEDLFAASSVIGAMSVEAAMGSRSPFDPRIHAARGQKGQMDAAGLFRHLLGDESEISLSHVDCEKVQDPYSLRCQPQVLGACLTQIRQAAEVLGTEANGVTDNPLVFQDTGDIISGGNFHAEPVAMAADNLAIALAELGAIAERRIALLIDPNLSKLPPFLVENGGVNSGFMIAQVTAAALASENKTYAHPASVDSLPTSANQEDHVSMATFAARRLRDMSENTRGVLAIELLAAAQGLDFRAPLQPSAAVAKAKAELREVVTYYDKDRFFGPDIEASTDLLLTSSFNSYLPAGILASF.

Residues 143 to 145 constitute a cross-link (5-imidazolinone (Ala-Gly)); the sequence is ASG. S144 carries the 2,3-didehydroalanine (Ser) modification.

The protein belongs to the PAL/histidase family. Contains an active site 4-methylidene-imidazol-5-one (MIO), which is formed autocatalytically by cyclization and dehydration of residues Ala-Ser-Gly.

Its subcellular location is the cytoplasm. It catalyses the reaction L-histidine = trans-urocanate + NH4(+). The protein operates within amino-acid degradation; L-histidine degradation into L-glutamate; N-formimidoyl-L-glutamate from L-histidine: step 1/3. This Shewanella woodyi (strain ATCC 51908 / MS32) protein is Histidine ammonia-lyase.